The sequence spans 607 residues: ENTH domain-containing protein 1 (607 aa).

An ENTH domain is found at 9 to 141 (NFVKNYSDAE…MDEPLLCKER (133 aa)). Residues 543–574 (EAKNSISVLLREVKRAIARLHEDLSTVIQELN) adopt a coiled-coil conformation.

This Homo sapiens (Human) protein is ENTH domain-containing protein 1 (ENTHD1).